The chain runs to 912 residues: Translation initiation factor IF-2 (912 aa).

The tract at residues 26–297 (SDQGEFVKSA…RGRKSKRAKR (272 aa)) is disordered. Positions 56–74 (KPAPAASNGAAAEAAAPPK) are enriched in low complexity. Pro residues predominate over residues 100 to 120 (APEPPAAPAAPAAPAPKPSPA). A compositionally biased stretch (low complexity) spans 121–131 (ARPAAAEAAAP). 3 stretches are compositionally biased toward pro residues: residues 132–152 (APAP…PGAP), 173–183 (PRPQAPRPGAP), and 192–218 (NMPP…PGGG). Residues 219–283 (PRPGGAGRPG…GAAGAFGRPG (65 aa)) show a composition bias toward gly residues. Residues 287–296 (KRGRKSKRAK) show a composition bias toward basic residues. The 172-residue stretch at 408 to 579 (TRPPVVTVMG…AVLLTADAAL (172 aa)) folds into the tr-type G domain. A G1 region spans residues 417–424 (GHVDHGKT). GTP is bound at residue 417-424 (GHVDHGKT). The interval 442-446 (GITQH) is G2. Positions 467–470 (DTPG) are G3. GTP contacts are provided by residues 467-471 (DTPGH) and 521-524 (NKID). Residues 521–524 (NKID) form a G4 region. Residues 557–559 (SAR) form a G5 region.

It belongs to the TRAFAC class translation factor GTPase superfamily. Classic translation factor GTPase family. IF-2 subfamily.

It is found in the cytoplasm. Its function is as follows. One of the essential components for the initiation of protein synthesis. Protects formylmethionyl-tRNA from spontaneous hydrolysis and promotes its binding to the 30S ribosomal subunits. Also involved in the hydrolysis of GTP during the formation of the 70S ribosomal complex. The polypeptide is Translation initiation factor IF-2 (Mycobacteroides abscessus (strain ATCC 19977 / DSM 44196 / CCUG 20993 / CIP 104536 / JCM 13569 / NCTC 13031 / TMC 1543 / L948) (Mycobacterium abscessus)).